The sequence spans 258 residues: MTRYKAQISYDGSAFSGFQRQPNCRTVQEEIERTLKRLNSGNDVIIHGAGRTDAGVHAYGQVIHFDLPQARDVEKLRFGLDTQCPDDIDIVKVEQVSDDFHCRYDKHIKTYEFLVDIGRPKNPMMRNYATHYPYPVIIELMKEAIKDLVGTHDFTGFTASGTSVENKVRTIFDAKIQFEASKNLLIFTFTGNGFLYKQVRNMVGTLLKIGNGRMPISQIKTILQAKNRDLAGPTAAGNGLYLKEIIYEDEECFSNFRK.

Residue aspartate 53 is the Nucleophile of the active site. Tyrosine 111 contacts substrate.

The protein belongs to the tRNA pseudouridine synthase TruA family. As to quaternary structure, homodimer.

It carries out the reaction uridine(38/39/40) in tRNA = pseudouridine(38/39/40) in tRNA. Its function is as follows. Formation of pseudouridine at positions 38, 39 and 40 in the anticodon stem and loop of transfer RNAs. This is tRNA pseudouridine synthase A from Streptococcus agalactiae serotype Ia (strain ATCC 27591 / A909 / CDC SS700).